The chain runs to 82 residues: Immediate early response 3-interacting protein 1 (82 aa).

Transmembrane regions (helical) follow at residues 2–22 (AFTLYTLLQAALLCVNAVAVL) and 62–82 (VMRVPLIIVNSVTIVLLLLFG).

The protein belongs to the YOS1 family.

It localises to the endoplasmic reticulum membrane. Its function is as follows. Regulator of endoplasmic reticulum secretion that acts as a key determinant of brain size. Required for secretion of extracellular matrix proteins. Required for correct brain development by depositing sufficient extracellular matrix proteins for tissue integrity and the proliferation of neural progenitors. Acts as a regulator of the unfolded protein response (UPR). The polypeptide is Immediate early response 3-interacting protein 1 (Xenopus laevis (African clawed frog)).